The chain runs to 372 residues: Chorismate synthase (372 aa).

An NADP(+)-binding site is contributed by R48. Residues 131–133, 243–244, G288, 303–307, and R329 each bind FMN; these read RSS, NA, and KPTSS.

This sequence belongs to the chorismate synthase family. In terms of assembly, homotetramer. It depends on FMNH2 as a cofactor.

The enzyme catalyses 5-O-(1-carboxyvinyl)-3-phosphoshikimate = chorismate + phosphate. It functions in the pathway metabolic intermediate biosynthesis; chorismate biosynthesis; chorismate from D-erythrose 4-phosphate and phosphoenolpyruvate: step 7/7. Functionally, catalyzes the anti-1,4-elimination of the C-3 phosphate and the C-6 proR hydrogen from 5-enolpyruvylshikimate-3-phosphate (EPSP) to yield chorismate, which is the branch point compound that serves as the starting substrate for the three terminal pathways of aromatic amino acid biosynthesis. This reaction introduces a second double bond into the aromatic ring system. The polypeptide is Chorismate synthase (Caulobacter vibrioides (strain ATCC 19089 / CIP 103742 / CB 15) (Caulobacter crescentus)).